A 558-amino-acid polypeptide reads, in one-letter code: Dihydroxy-acid dehydratase (558 aa).

Cysteine 48 lines the [2Fe-2S] cluster pocket. Aspartate 80 lines the Mg(2+) pocket. Cysteine 121 contributes to the [2Fe-2S] cluster binding site. Residues aspartate 122 and lysine 123 each contribute to the Mg(2+) site. Lysine 123 bears the N6-carboxylysine mark. Position 193 (cysteine 193) interacts with [2Fe-2S] cluster. Glutamate 445 contacts Mg(2+). Serine 471 (proton acceptor) is an active-site residue.

Belongs to the IlvD/Edd family. Homodimer. Requires [2Fe-2S] cluster as cofactor. Mg(2+) is required as a cofactor.

It catalyses the reaction (2R)-2,3-dihydroxy-3-methylbutanoate = 3-methyl-2-oxobutanoate + H2O. It carries out the reaction (2R,3R)-2,3-dihydroxy-3-methylpentanoate = (S)-3-methyl-2-oxopentanoate + H2O. It functions in the pathway amino-acid biosynthesis; L-isoleucine biosynthesis; L-isoleucine from 2-oxobutanoate: step 3/4. The protein operates within amino-acid biosynthesis; L-valine biosynthesis; L-valine from pyruvate: step 3/4. In terms of biological role, functions in the biosynthesis of branched-chain amino acids. Catalyzes the dehydration of (2R,3R)-2,3-dihydroxy-3-methylpentanoate (2,3-dihydroxy-3-methylvalerate) into 2-oxo-3-methylpentanoate (2-oxo-3-methylvalerate) and of (2R)-2,3-dihydroxy-3-methylbutanoate (2,3-dihydroxyisovalerate) into 2-oxo-3-methylbutanoate (2-oxoisovalerate), the penultimate precursor to L-isoleucine and L-valine, respectively. In Prochlorococcus marinus (strain SARG / CCMP1375 / SS120), this protein is Dihydroxy-acid dehydratase.